Here is a 235-residue protein sequence, read N- to C-terminus: Aspartate/glutamate leucyltransferase (235 aa).

It belongs to the R-transferase family. Bpt subfamily.

The protein localises to the cytoplasm. It catalyses the reaction N-terminal L-glutamyl-[protein] + L-leucyl-tRNA(Leu) = N-terminal L-leucyl-L-glutamyl-[protein] + tRNA(Leu) + H(+). The enzyme catalyses N-terminal L-aspartyl-[protein] + L-leucyl-tRNA(Leu) = N-terminal L-leucyl-L-aspartyl-[protein] + tRNA(Leu) + H(+). Its function is as follows. Functions in the N-end rule pathway of protein degradation where it conjugates Leu from its aminoacyl-tRNA to the N-termini of proteins containing an N-terminal aspartate or glutamate. This chain is Aspartate/glutamate leucyltransferase, found in Pseudomonas paraeruginosa (strain DSM 24068 / PA7) (Pseudomonas aeruginosa (strain PA7)).